Reading from the N-terminus, the 604-residue chain is MVKHSFIALAEHASKLRRSIPPVKLTYKNMLRDPSVKYRAFAPPKMVKRIWPDKTIQKAPRWLSTDLRDGNQSLPDPMSVAQKKEYFHKLINIGFKEIEVSFPSASQTDFDFTRYAVENAPDDVGIQCLVQSREHLIKRTVEALTGAKRATIHTYLATSDMFREIVFNMSREEAISKAVEATKLVRKLTKDDPSQQATRWSYEFSPECFSDTPGEFAVEICEAVKKAWEPTEENPIIFNLPATVEVASPNVYADQIEYFSTHITEREKVCISTHCHNDRGCGVAATELGMLAGADRVEGCLFGNGERTGNVDLVTVAMNMYTQGVSPNLDFSDLTSISEIVHRCNKIPIPPRAPYGGELVVSAFSGSHQDAIKKGFAIQNKKQAQGETRWRIPYLPLDPKDIGRDYEAVIRVNSQSGKGGAAWVIMRSLGLDVPRPMQVDFSNTLQKNADALGRELKSEEITKLFKETYNYNNNEHIYVTLLNYEVKKLNPERRALVGQVEINDKVVNIEGYGNGPISSLVDALSNLLNVKLSVQNYSEHSLGSGSATQAASFINLSYIKDINNHATSNMWGVGVSEDTGDASIKAVFATVNNIIHSGDVLLAE.

A mitochondrion-targeting transit peptide spans 1–50 (MVKHSFIALAEHASKLRRSIPPVKLTYKNMLRDPSVKYRAFAPPKMVKRI). Residues 60–335 (PRWLSTDLRD…SPNLDFSDLT (276 aa)) form the Pyruvate carboxyltransferase domain. Residues Asp-69, His-274, His-276, and Asn-310 each coordinate a divalent metal cation.

It belongs to the alpha-IPM synthase/homocitrate synthase family. LeuA type 2 subfamily. Homodimer. The cofactor is a divalent metal cation.

It localises to the mitochondrion. The enzyme catalyses 3-methyl-2-oxobutanoate + acetyl-CoA + H2O = (2S)-2-isopropylmalate + CoA + H(+). The protein operates within amino-acid biosynthesis; L-leucine biosynthesis; L-leucine from 3-methyl-2-oxobutanoate: step 1/4. In terms of biological role, catalyzes the condensation of the acetyl group of acetyl-CoA with 3-methyl-2-oxobutanoate (2-oxoisovalerate) to form 3-carboxy-3-hydroxy-4-methylpentanoate (2-isopropylmalate). Redundant to LEU4, responsible for about 20% of alpha-IPMS activity. Involved in leucine synthesis. The chain is 2-isopropylmalate synthase 2, mitochondrial from Saccharomyces cerevisiae (strain ATCC 204508 / S288c) (Baker's yeast).